Reading from the N-terminus, the 550-residue chain is Solute carrier family 22 member 11 (550 aa).

Topologically, residues 1–10 (MAFSKLLEQA) are cytoplasmic. A helical transmembrane segment spans residues 11 to 31 (GGVGLFQTLQVLTFILPCLMI). Residues 32–142 (PSQMLLENFS…DLVCSSQGLK (111 aa)) lie on the Extracellular side of the membrane. N-linked (GlcNAc...) asparagine glycosylation is found at Asn39, Asn56, and Asn99. A helical membrane pass occupies residues 143–163 (PLSQSIFMSGILVGSFIWGLL). Topologically, residues 164–174 (SYRFGRKPMLS) are cytoplasmic. The helical transmembrane segment at 175-195 (WCCLQLAVAGTSTIFAPTFVI) threads the bilayer. Residues 196–200 (YCGLR) are Extracellular-facing. The helical transmembrane segment at 201-221 (FVAAFGMAGIFLSSLTLMVEW) threads the bilayer. Residues 222–231 (TTTSRRAVTM) lie on the Cytoplasmic side of the membrane. A helical membrane pass occupies residues 232–252 (TVVGCAFSAGQAALGGLAFAL). Topologically, residues 253-256 (RDWR) are extracellular. Residues 257–277 (TLQLAASVPFFAISLISWWLP) traverse the membrane as a helical segment. The Cytoplasmic portion of the chain corresponds to 278 to 346 (ESARWLIIKG…FCVPVLRWRS (69 aa)). A helical membrane pass occupies residues 347–367 (CAMLVVNFSLLISYYGLVFDL). The Extracellular segment spans residues 368 to 378 (QSLGRDIFLLQ). A helical membrane pass occupies residues 379 to 399 (ALFGAVDFLGRATTALLLSFL). Over 400 to 402 (GRR) the chain is Cytoplasmic. The chain crosses the membrane as a helical span at residues 403 to 423 (TIQAGSQAMAGLAILANMLVP). Residues 424–430 (QDLQTLR) are Extracellular-facing. Residues 431–451 (VVFAVLGKGCFGISLTCLTIY) form a helical membrane-spanning segment. Residues 452 to 463 (KAELFPTPVRMT) lie on the Cytoplasmic side of the membrane. The chain crosses the membrane as a helical span at residues 464-484 (ADGILHTVGRLGAMMGPLILM). At 485–490 (SRQALP) the chain is on the extracellular side. Residues 491–511 (LLPPLLYGVISIASSLVVLFF) traverse the membrane as a helical segment. Residues 512–550 (LPETQGLPLPDTIQDLESQKSTAAQGNRQEAVTVESTSL) lie on the Cytoplasmic side of the membrane. The disordered stretch occupies residues 531-550 (KSTAAQGNRQEAVTVESTSL).

Belongs to the major facilitator (TC 2.A.1) superfamily. Organic cation transporter (TC 2.A.1.19) family. Post-translationally, N-glycosylated. Contains several complex-type N-glycans. As to expression, expressed in placental trophoblasts, syncytiotrophoblast and cytotrophoblast. Also located in the proximal tubules in kidneys.

The protein localises to the cell membrane. The protein resides in the apical cell membrane. Its subcellular location is the basal cell membrane. The catalysed reaction is estrone 3-sulfate(out) + glutarate(in) = estrone 3-sulfate(in) + glutarate(out). The enzyme catalyses dehydroepiandrosterone 3-sulfate(out) = dehydroepiandrosterone 3-sulfate(in). It carries out the reaction prostaglandin F2alpha(out) = prostaglandin F2alpha(in). It catalyses the reaction prostaglandin E2(out) = prostaglandin E2(in). Functionally, antiporter that mediates the transport of conjugated steroids and other specific organic anions at the basal membrane of syncytiotrophoblast and at the apical membrane of proximal tubule epithelial cells, in exchange for anionic compounds. May be responsible for placental absorption of fetal-derived steroid sulfates such as estrone sulfate (E1S) and the steroid hormone precursor dehydroepiandrosterone sulfate (DHEA-S), as well as clearing waste products and xenobiotics from the fetus. Maybe also be involved in placental urate homeostasis. Facilitates the renal reabsorption of organic anions such as urate and derived steroid sulfates. Organic anion glutarate acts as conteranion for E1S renal uptake. Possible transport mode may also include DHEA-S/E1S exchange. Also interacts with inorganic anions such as chloride and hydroxyl ions, therefore possible transport modes may include E1S/Cl(-), E1S/OH(-), urate/Cl(-) and urate/OH(-). Also mediates the transport of prostaglandin E2 (PGE2) and prostaglandin F2-alpha (PGF2-alpha) and may be involved in their renal excretion. Also able to uptake anionic drugs, diuretics, bile salts and ochratoxin A. Mediates the unidirectional efflux of glutamate and aspartate. Glutamate efflux down its transmembrane gradient may drive SLC22A11/OAT4-mediated placental uptake of E1S. The chain is Solute carrier family 22 member 11 from Homo sapiens (Human).